An 825-amino-acid polypeptide reads, in one-letter code: Zinc finger protein 28 (825 aa).

Positions 26 to 65 (RPGGGPAAGTVVAPGSPDRGRPRSRNSLASQDQQGAVTSG) are disordered. The segment covering 33-42 (AGTVVAPGSP) has biased composition (low complexity). Positions 51 to 65 (NSLASQDQQGAVTSG) are enriched in polar residues. Positions 103 to 174 (VTFGDVAVVF…KRKMRKGQHL (72 aa)) constitute a KRAB domain. 14 consecutive C2H2-type zinc fingers follow at residues 377-399 (FQCN…QRIH), 405-427 (YKCN…QRCH), 433-456 (YECP…RYYH), 462-484 (FDCI…RRIH), 490-512 (YTCE…QRIH), 518-540 (YECE…QRVH), 546-568 (FKCK…WRIH), 574-596 (FECG…QRIH), 602-624 (YECK…QKTH), 630-652 (YECK…QRVH), 658-680 (YKCL…RRLH), 686-708 (YECV…RRCH), 714-736 (YECS…QRIH), and 742-764 (YECK…KRVH). The segment at 770 to 792 (YNYKKGRRAFRQTAHFAHHQQIH) adopts a C2H2-type 15; degenerate zinc-finger fold.

The protein belongs to the krueppel C2H2-type zinc-finger protein family. In terms of tissue distribution, expressed predominantly in ovary.

Its subcellular location is the nucleus. Functionally, may be involved in transcriptional regulation. May have a role in embryonic development. This Mus musculus (Mouse) protein is Zinc finger protein 28 (Zfp28).